A 736-amino-acid chain; its full sequence is Protein kinase C epsilon type (736 aa).

The C2 domain occupies 1-117; that stretch reads MVVFNGLLKI…NGSRHFEDWI (117 aa). Serine 62 bears the Phosphoserine mark. The segment at 169–220 adopts a Phorbol-ester/DAG-type 1 zinc-finger fold; the sequence is GHKFMATYLRQPTYCSHCRDFIWGVIGKQGYQCQVCTCVVHKRCHELIITKV. Threonine 228 carries the phosphothreonine modification. Position 234 is a phosphoserine (serine 234). A Phorbol-ester/DAG-type 2 zinc finger spans residues 242-292; it reads PHKFGIHNYKVPTFCDHCGSLLWGLLRQGLQCKVCKMNVHRRCETNVAPNC. Phosphothreonine is present on threonine 309. Residues 310–356 are disordered; sequence PDKITNSGQRRKKLIGGAESPQPTSGSSPSEEDRSKSAPTSPCDQEL. Residues serine 316, serine 329, and serine 337 each carry the phosphoserine modification. Phosphoserine; by GSK3-beta is present on serine 346. Threonine 349 is modified (phosphothreonine). Serine 350 is modified (phosphoserine; by MAPK11 and MAPK14). The residue at position 368 (serine 368) is a Phosphoserine; by autocatalysis. The interval 369 to 397 is disordered; the sequence is FDNRGEEHRAASSTDGQLGSPENGEVRQG. Serine 388 bears the Phosphoserine mark. One can recognise a Protein kinase domain in the interval 407-667; the sequence is FNFIKVLGKG…EDAIKQHPFF (261 aa). Residues 413 to 421 and lysine 436 contribute to the ATP site; that span reads LGKGSFGKV. The active-site Proton acceptor is the aspartate 531. Threonine 565 bears the Phosphothreonine; by PDPK1 mark. Positions 668–736 constitute an AGC-kinase C-terminal domain; sequence KEIDWVLLEQ…FSYFGEDLMP (69 aa). Residue threonine 702 is modified to Phosphothreonine. The residue at position 709 (threonine 709) is a Phosphothreonine; by autocatalysis. At serine 728 the chain carries Phosphoserine; by autocatalysis.

It belongs to the protein kinase superfamily. AGC Ser/Thr protein kinase family. PKC subfamily. In terms of assembly, forms a ternary complex with TRIM63 and RACK1/GN2BL1. Can form a complex with PDLIM5 and N-type calcium channel. Interacts with COPB1. Interacts with DGKQ. Interacts with STAT3. Interacts with YWHAB. Interacts with HSP90AB1; promotes functional activation in a heat shock-dependent manner. Interacts (via phorbol-ester/DAG-type 2 domain) with PRPH and VIM. Interacts with NLRP5/MATER. Phosphorylation on Thr-565 by PDPK1 triggers autophosphorylation on Ser-728. Phosphorylation in the hinge domain at Ser-350 by MAPK11 or MAPK14, Ser-346 by GSK3B and Ser-368 by autophosphorylation is required for interaction with YWHAB. In response to growth factors, phosphorylated at Thr-702 and Ser-728 by the mTORC2 complex, promoting autophosphorylation and activation of PRKCE.

It localises to the cytoplasm. The protein resides in the cytoskeleton. Its subcellular location is the cell membrane. It is found in the perinuclear region. The protein localises to the nucleus. It carries out the reaction L-seryl-[protein] + ATP = O-phospho-L-seryl-[protein] + ADP + H(+). The catalysed reaction is L-threonyl-[protein] + ATP = O-phospho-L-threonyl-[protein] + ADP + H(+). With respect to regulation, novel PKCs (PRKCD, PRKCE, PRKCH and PRKCQ) are calcium-insensitive, but activated by diacylglycerol (DAG) and phosphatidylserine. Three specific sites; Thr-565 (activation loop of the kinase domain), Thr-709 (turn motif) and Ser-728 (hydrophobic region), need to be phosphorylated for its full activation. Calcium-independent, phospholipid- and diacylglycerol (DAG)-dependent serine/threonine-protein kinase that plays essential roles in the regulation of multiple cellular processes linked to cytoskeletal proteins, such as cell adhesion, motility, migration and cell cycle, functions in neuron growth and ion channel regulation, and is involved in immune response, cancer cell invasion and regulation of apoptosis. Mediates cell adhesion to the extracellular matrix via integrin-dependent signaling, by mediating angiotensin-2-induced activation of integrin beta-1 (ITGB1) in cardiac fibroblasts. Phosphorylates MARCKS, which phosphorylates and activates PTK2/FAK, leading to the spread of cardiomyocytes. Involved in the control of the directional transport of ITGB1 in mesenchymal cells by phosphorylating vimentin (VIM), an intermediate filament (IF) protein. In epithelial cells, associates with and phosphorylates keratin-8 (KRT8), which induces targeting of desmoplakin at desmosomes and regulates cell-cell contact. Phosphorylates IQGAP1, which binds to CDC42, mediating epithelial cell-cell detachment prior to migration. During cytokinesis, forms a complex with YWHAB, which is crucial for daughter cell separation, and facilitates abscission by a mechanism which may implicate the regulation of RHOA. In cardiac myocytes, regulates myofilament function and excitation coupling at the Z-lines, where it is indirectly associated with F-actin via interaction with COPB1. During endothelin-induced cardiomyocyte hypertrophy, mediates activation of PTK2/FAK, which is critical for cardiomyocyte survival and regulation of sarcomere length. Plays a role in the pathogenesis of dilated cardiomyopathy via persistent phosphorylation of troponin I (TNNI3). Involved in nerve growth factor (NFG)-induced neurite outgrowth and neuron morphological change independently of its kinase activity, by inhibition of RHOA pathway, activation of CDC42 and cytoskeletal rearrangement. May be involved in presynaptic facilitation by mediating phorbol ester-induced synaptic potentiation. Phosphorylates gamma-aminobutyric acid receptor subunit gamma-2 (GABRG2), which reduces the response of GABA receptors to ethanol and benzodiazepines and may mediate acute tolerance to the intoxicating effects of ethanol. Upon PMA treatment, phosphorylates the capsaicin- and heat-activated cation channel TRPV1, which is required for bradykinin-induced sensitization of the heat response in nociceptive neurons. Is able to form a complex with PDLIM5 and N-type calcium channel, and may enhance channel activities and potentiates fast synaptic transmission by phosphorylating the pore-forming alpha subunit CACNA1B (CaV2.2). Downstream of TLR4, plays an important role in the lipopolysaccharide (LPS)-induced immune response by phosphorylating and activating TICAM2/TRAM, which in turn activates the transcription factor IRF3 and subsequent cytokines production. In differentiating erythroid progenitors, is regulated by EPO and controls the protection against the TNFSF10/TRAIL-mediated apoptosis, via BCL2. May be involved in the regulation of the insulin-induced phosphorylation and activation of AKT1. Phosphorylates NLRP5/MATER and may thereby modulate AKT pathway activation in cumulus cells. Phosphorylates and activates LRRK1, which phosphorylates RAB proteins involved in intracellular trafficking. The chain is Protein kinase C epsilon type (PRKCE) from Oryctolagus cuniculus (Rabbit).